We begin with the raw amino-acid sequence, 524 residues long: Zinc finger CCCH-type with G patch domain-containing protein (524 aa).

Residues Ser105–Lys142 form a disordered region. Over residues Glu106–Lys122 the composition is skewed to polar residues. Residues Glu125–Asn137 show a composition bias toward acidic residues. Residues Lys184–Val210 form a C3H1-type zinc finger. The disordered stretch occupies residues Arg279–Glu298. The G-patch domain maps to Thr326–Glu372. 2 disordered regions span residues Gln375 to Lys402 and Gly500 to Phe524. The segment covering Arg376 to Lys393 has biased composition (basic residues).

It localises to the nucleus. Its function is as follows. Transcription repressor that specifically binds the 5'-GGAG[GA]A[GA]A-3' consensus sequence. Represses transcription by recruiting the chromatin multiprotein complex NuRD to target promoters. Negatively regulates expression of EGFR, a gene involved in cell proliferation, survival and migration. This is Zinc finger CCCH-type with G patch domain-containing protein (zgpat) from Xenopus laevis (African clawed frog).